A 500-amino-acid chain; its full sequence is NAD(P)H-quinone oxidoreductase chain 4, chloroplastic (500 aa).

14 helical membrane passes run 4-24, 37-57, 80-100, 113-130, 134-154, 167-187, 208-228, 242-262, 272-292, 305-325, 330-350, 386-406, 416-436, and 462-482; these read FYWLTIIVVLPISAGSLIALL, ICICLFELLLTTYVFCYHFQL, LGIDGLSIGPILLTGFITTLA, LFHFLMLAMYSGQIGLFS, LLLFFIMWELELIPVYLLLSM, FILYTAGGSIFLLMGVLGMGL, ALEIIFYFGFLIAYAVKSPII, HYSTCMLLAGILLKMGAYGLV, AHSIFSPWLMIVGTIQIIYAA, IAYSSVSHMGFIIIGISSITD, GAILQIISHGFIGAALFFLAG, LALPGMSGFVAELVIFLGIIT, ILITFVMAIGMILTPIYSLSM, and IFILICILLPIIGIGIYPDFV.

The protein belongs to the complex I subunit 4 family.

It is found in the plastid. The protein localises to the chloroplast thylakoid membrane. The catalysed reaction is a plastoquinone + NADH + (n+1) H(+)(in) = a plastoquinol + NAD(+) + n H(+)(out). The enzyme catalyses a plastoquinone + NADPH + (n+1) H(+)(in) = a plastoquinol + NADP(+) + n H(+)(out). This chain is NAD(P)H-quinone oxidoreductase chain 4, chloroplastic, found in Nuphar advena (Common spatterdock).